Reading from the N-terminus, the 421-residue chain is UDP-N-acetylglucosamine 1-carboxyvinyltransferase (421 aa).

22–23 (KN) is a binding site for phosphoenolpyruvate. Arg93 is a binding site for UDP-N-acetyl-alpha-D-glucosamine. Catalysis depends on Cys117, which acts as the Proton donor. Cys117 bears the 2-(S-cysteinyl)pyruvic acid O-phosphothioketal mark. Residues 122–126 (RPVDL), Asp308, and Ile330 contribute to the UDP-N-acetyl-alpha-D-glucosamine site.

Belongs to the EPSP synthase family. MurA subfamily.

It is found in the cytoplasm. It carries out the reaction phosphoenolpyruvate + UDP-N-acetyl-alpha-D-glucosamine = UDP-N-acetyl-3-O-(1-carboxyvinyl)-alpha-D-glucosamine + phosphate. It functions in the pathway cell wall biogenesis; peptidoglycan biosynthesis. Cell wall formation. Adds enolpyruvyl to UDP-N-acetylglucosamine. The protein is UDP-N-acetylglucosamine 1-carboxyvinyltransferase of Pseudomonas fluorescens (strain ATCC BAA-477 / NRRL B-23932 / Pf-5).